The chain runs to 117 residues: Putative membrane protein insertion efficiency factor (117 aa).

A disordered region spans residues 87–117 (RKGGPSAAEPAIEGHIPSSPAAETPSHVQGA).

The protein belongs to the UPF0161 family.

The protein localises to the cell membrane. Functionally, could be involved in insertion of integral membrane proteins into the membrane. The sequence is that of Putative membrane protein insertion efficiency factor from Streptomyces avermitilis (strain ATCC 31267 / DSM 46492 / JCM 5070 / NBRC 14893 / NCIMB 12804 / NRRL 8165 / MA-4680).